We begin with the raw amino-acid sequence, 334 residues long: Methionine adenosyltransferase 2 subunit beta (334 aa).

NADP(+) contacts are provided by residues 37–40 (TGLL), 60–62 (FRR), 71–72 (NL), cysteine 93, arginine 97, tyrosine 159, and leucine 185. Threonine 309 is modified (phosphothreonine). Positions 319 to 334 (LWPFLIDKRWRQTVFH) are required for interaction with MAT2A.

This sequence belongs to the dTDP-4-dehydrorhamnose reductase family. MAT2B subfamily. As to quaternary structure, heterotrimer; composed of a catalytic MAT2A homodimer that binds one regulatory MAT2B chain. Heterohexamer; composed of a central, catalytic MAT2A homotetramer flanked on either side by a regulatory MAT2B chain. NADP binding increases the affinity for MAT2A.

Its pathway is amino-acid biosynthesis; S-adenosyl-L-methionine biosynthesis; S-adenosyl-L-methionine from L-methionine: step 1/1. Regulatory subunit of S-adenosylmethionine synthetase 2, an enzyme that catalyzes the formation of S-adenosylmethionine from methionine and ATP. Regulates MAT2A catalytic activity by changing its kinetic properties, increasing its affinity for L-methionine. Can bind NADP (in vitro). The protein is Methionine adenosyltransferase 2 subunit beta (MAT2B) of Pongo abelii (Sumatran orangutan).